The chain runs to 70 residues: Small ribosomal subunit protein bS21A (70 aa).

This sequence belongs to the bacterial ribosomal protein bS21 family.

The chain is Small ribosomal subunit protein bS21A from Paraburkholderia xenovorans (strain LB400).